Consider the following 494-residue polypeptide: MAQTKRSRDESEKEEVVVKADVESSDVDHSFKSLNLSQPTMRAIEKMGFSKMTPVQARTIPPLMAGRDVLGAAKTGSGKTLAFLLPTIELLHSLKFKPRNGTGVIIITPTRELALQIFGVVRELMEFHSQTFGIVIGGANRRQEAEKLMKGVNLLVATPGRLLDHLQNTKGFIFKNLKALVIDEADRILEIGFEDEMRQIIKILPNEDRQSMLFSATQTTKVEDLSRISLRPGPLFINVVSEHDSSTADGLEQGYVVCESDKRFLLLFSFLKRNQKKKIIVFLSSCNSVKYYAELLNYIDLPVLELHGKQKQQKRTNTFFEFCNAERGILICTDVAARGLDIPAVDWIIQFDPPDDPRDYIHRVGRTARGTNGKGKSLMFLIPNELGFLRYLKAAKVPLNEYEFPTNKIANVQSQLEKLIKSNYYLHQTAKDGYRSYLQAYASHSLKTVYQIDKLDLAKVAKSYGFPVPPKVNITIGASGKTPTVVKKRKTHKH.

The disordered stretch occupies residues 1–23 (MAQTKRSRDESEKEEVVVKADVE). The Q motif signature appears at 29–57 (HSFKSLNLSQPTMRAIEKMGFSKMTPVQA). The region spanning 60–236 (IPPLMAGRDV…RISLRPGPLF (177 aa)) is the Helicase ATP-binding domain. 73-80 (AKTGSGKT) contributes to the ATP binding site. The short motif at 183-186 (DEAD) is the DEAD box element. In terms of domain architecture, Helicase C-terminal spans 250–420 (GLEQGYVVCE…NVQSQLEKLI (171 aa)). A Bipartite nuclear localization signal motif is present at residues 262–278 (KRFLLLFSFLKRNQKKK).

The protein belongs to the DEAD box helicase family. DDX18/HAS1 subfamily. Associates in the nucleolus with the 60S and pre-60S ribosomal subunits.

The protein resides in the nucleus. It localises to the nucleolus. The catalysed reaction is ATP + H2O = ADP + phosphate + H(+). ATP-dependent RNA helicase involved in 40S ribosomal subunit biogenesis. Required for the processing and cleavage of 35S pre-rRNA at sites A0, A1, and A2, leading to mature 18S rRNA. This chain is ATP-dependent RNA helicase HAS1 (HAS1), found in Candida glabrata (strain ATCC 2001 / BCRC 20586 / JCM 3761 / NBRC 0622 / NRRL Y-65 / CBS 138) (Yeast).